A 119-amino-acid chain; its full sequence is MDRVALRGLKARGHHGVFPKEREDGQTFLVDIVLGLDTRPAAADDDLAKTVHYGIVAEEVVAVVEGEPVNLVETLAERIAQVCLKHEGVEEVEVCVHKPDAPITVPFDDVTVTIIRSRV.

Residues glutamate 21, tyrosine 53, and valine 72–glutamate 73 each bind substrate. Residue lysine 98 is the Proton donor/acceptor of the active site.

The protein belongs to the DHNA family.

The catalysed reaction is 7,8-dihydroneopterin = 6-hydroxymethyl-7,8-dihydropterin + glycolaldehyde. It functions in the pathway cofactor biosynthesis; tetrahydrofolate biosynthesis; 2-amino-4-hydroxy-6-hydroxymethyl-7,8-dihydropteridine diphosphate from 7,8-dihydroneopterin triphosphate: step 3/4. In terms of biological role, catalyzes the conversion of 7,8-dihydroneopterin to 6-hydroxymethyl-7,8-dihydropterin. The chain is Dihydroneopterin aldolase (folB) from Streptomyces coelicolor (strain ATCC BAA-471 / A3(2) / M145).